Reading from the N-terminus, the 360-residue chain is Peptide chain release factor 1 (360 aa).

Residue Q235 is modified to N5-methylglutamine. Positions 281-307 (ERQRADSERSADRRNQVGSGDRSERIR) are enriched in basic and acidic residues. The interval 281–310 (ERQRADSERSADRRNQVGSGDRSERIRTYN) is disordered.

The protein belongs to the prokaryotic/mitochondrial release factor family. Post-translationally, methylated by PrmC. Methylation increases the termination efficiency of RF1.

It localises to the cytoplasm. Functionally, peptide chain release factor 1 directs the termination of translation in response to the peptide chain termination codons UAG and UAA. This chain is Peptide chain release factor 1, found in Sinorhizobium medicae (strain WSM419) (Ensifer medicae).